A 623-amino-acid chain; its full sequence is MWKLLLWVGLVLVLKHHDGAAHKLVCYFTNWAHSRPGPASILPHDLDPFLCTHLIFAFASMNNNQIVAKDLQDEKILYPEFNKLKERNRELKTLLSIGGWNFGTSRFTTMLSTFANREKFIASVISLLRTHDFDGLDLFFLYPGLRGSPMHDRWTFLFLIEELLFAFRKEALLTMRPRLLLSAAVSGVPHIVQTSYDVRFLGRLLDFINVLSYDLHGSWEKFTGHNSPLFSLPEDPKSSAYAMNYWRKLGAPSEKLIMGIPTYGRTFRLLKASKNGLQATAIGPASPGKYTKQAGFLAYFEICSFVWGAKKHWIDYQYVPYANKGKEWVGYDDAISFSYKAWFIRREHFGGAMVWTLDMDDVRGTFCGTGPFPLVYVMNDILVRAEFSSTSLPQFWLSSAVNSSSTDPERLAVTKAWTTDIKILPPGGEAGVTEIHGKCENMTITPRVTIVTPTKETVSLGKHTVALGEKTEITGATTMTSVGHQSMTPGEKALTPVGHQSELPGKKTLTPVGHQSVTTGQKTLISVGYHSVTPGEKTLTPVGHPSVTPVSHQSVSPGGMTMTPVHFQTETLRQNTMAPRRKAVAHEKVTVPSRKISVTPEGQTVPLRGEYLTSETGTHPQDG.

The first 21 residues, 1–21 (MWKLLLWVGLVLVLKHHDGAA), serve as a signal peptide directing secretion. One can recognise a GH18 domain in the interval 22–385 (HKLVCYFTNW…YVMNDILVRA (364 aa)). A disulfide bridge links Cys26 with Cys51. Chitin contacts are provided by residues 71–72 (LQ), 98–101 (GGWN), Tyr142, 211–214 (LSYD), and Trp355. N-linked (GlcNAc...) asparagine glycans are attached at residues Asn402 and Asn441. 2 disordered regions span residues 539–558 (LTPV…VSPG) and 594–623 (RKIS…PQDG). Polar residues predominate over residues 613–623 (TSETGTHPQDG).

It belongs to the glycosyl hydrolase 18 family. Oviduct.

It is found in the cytoplasmic vesicle. The protein resides in the secretory vesicle. In terms of biological role, binds to oocyte zona pellucida in vivo. May play a role in the fertilization process and/or early embryonic development. The chain is Oviduct-specific glycoprotein (OVGP1) from Papio anubis (Olive baboon).